The primary structure comprises 189 residues: NADH-ubiquinone oxidoreductase 20.9 kDa subunit (189 aa).

A helical transmembrane segment spans residues 73 to 88 (AMRLATAVGFFGGFLY).

In terms of assembly, complex I is composed of about 40 different subunits. In terms of processing, the N-terminus is blocked.

The protein resides in the mitochondrion inner membrane. The catalysed reaction is a ubiquinone + NADH + 5 H(+)(in) = a ubiquinol + NAD(+) + 4 H(+)(out). Its function is as follows. Transfer of electrons from NADH to the respiratory chain. The immediate electron acceptor for the enzyme is believed to be ubiquinone. This is NADH-ubiquinone oxidoreductase 20.9 kDa subunit (nuo20.9) from Neurospora crassa (strain ATCC 24698 / 74-OR23-1A / CBS 708.71 / DSM 1257 / FGSC 987).